The primary structure comprises 199 residues: Dephospho-CoA kinase (199 aa).

One can recognise a DPCK domain in the interval 3–199 (RIGLTGGIGS…HCKYLQIAQT (197 aa)). 11–16 (GSGKST) is an ATP binding site.

This sequence belongs to the CoaE family.

It localises to the cytoplasm. It catalyses the reaction 3'-dephospho-CoA + ATP = ADP + CoA + H(+). It functions in the pathway cofactor biosynthesis; coenzyme A biosynthesis; CoA from (R)-pantothenate: step 5/5. Its function is as follows. Catalyzes the phosphorylation of the 3'-hydroxyl group of dephosphocoenzyme A to form coenzyme A. In Coxiella burnetii (strain RSA 493 / Nine Mile phase I), this protein is Dephospho-CoA kinase.